Here is a 195-residue protein sequence, read N- to C-terminus: Glutathione S-transferase class-mu 26 kDa isozyme (195 aa).

The region spanning Met-1–Gly-83 is the GST N-terminal domain. Residues Tyr-7–Trp-8, Trp-41–Lys-45, Asn-54–Leu-55, and Gln-67–Ser-68 contribute to the glutathione site. In terms of domain architecture, GST C-terminal spans Cys-85 to Lys-195. Residue Tyr-111 coordinates substrate.

It belongs to the GST superfamily. Mu family. In terms of assembly, homodimer.

It catalyses the reaction RX + glutathione = an S-substituted glutathione + a halide anion + H(+). In terms of biological role, conjugation of reduced glutathione to a wide number of exogenous and endogenous hydrophobic electrophiles. GST isoenzymes appear to play a central role in the parasite detoxification system. Other functions are also suspected including a role in increasing the solubility of haematin in the parasite gut. This chain is Glutathione S-transferase class-mu 26 kDa isozyme, found in Schistosoma mansoni (Blood fluke).